Consider the following 451-residue polypeptide: MHQAGASTRRLHGVAILSTLKSMSTTPRGRIAVISMHTSPIEQPGVGDAGGMNVYIRSTSLELGALGYEVDIFTRATRSSQGKIVQLAPNVRLINIIAGPYEGLSKEELPTQMVAFTSGIIEFAQCEKVSYSLIHSHYWMSGQVGWLLRDLWRVPQVHTAHTLALVKNSALATGDRPEPESRRICEQQIVDNADRLVVNTEAGKDNLVFHYDADPEHIDVVLPGADVTQFSPGSDRATERSRRELGVPLHATVIAFVGRMQRLKGPQVLLRAVANMMKKHPDQELRVLMCGGPSGNGLARPTEFEDLARDLGIDPIVRFLAPRPPEDLASVYRAADIVAIPSYNESFGLVAVEAQASGTPVVAARAGGLPITIDDGTSGILVDGHDPADWATALQSLCDDDDRRIAMGENATDHASRFSWASSARHLSDIYEDAIRKGPHVRCGSDRAGAS.

His37 provides a ligand contact to 1D-myo-inositol 3-phosphate. UDP-N-acetyl-alpha-D-glucosamine-binding positions include 43–44 (QP) and Gly51. Residues 48–53 (DAGGMN), Lys106, Tyr138, Thr162, and Arg182 each bind 1D-myo-inositol 3-phosphate. UDP-N-acetyl-alpha-D-glucosamine-binding residues include Arg259, Lys264, and Arg323. The Mg(2+) site is built by Tyr332, Arg333, and Ala335. Positions 345 and 353 each coordinate UDP-N-acetyl-alpha-D-glucosamine. Residue Thr359 participates in Mg(2+) binding.

This sequence belongs to the glycosyltransferase group 1 family. MshA subfamily. Homodimer.

It catalyses the reaction 1D-myo-inositol 3-phosphate + UDP-N-acetyl-alpha-D-glucosamine = 1D-myo-inositol 2-acetamido-2-deoxy-alpha-D-glucopyranoside 3-phosphate + UDP + H(+). Functionally, catalyzes the transfer of a N-acetyl-glucosamine moiety to 1D-myo-inositol 3-phosphate to produce 1D-myo-inositol 2-acetamido-2-deoxy-glucopyranoside 3-phosphate in the mycothiol biosynthesis pathway. In Corynebacterium kroppenstedtii (strain DSM 44385 / JCM 11950 / CIP 105744 / CCUG 35717), this protein is D-inositol 3-phosphate glycosyltransferase.